Reading from the N-terminus, the 492-residue chain is Propanoyl-CoA:succinate CoA transferase (492 aa).

A CoA-binding site is contributed by 260-264 (GVGNI). The 5-glutamyl coenzyme A thioester intermediate role is filled by glutamate 286. Positions 376 and 380 each coordinate CoA.

This sequence belongs to the acetyl-CoA hydrolase/transferase family.

The catalysed reaction is propanoyl-CoA + succinate = propanoate + succinyl-CoA. In terms of biological role, catalyzes the transfer of coenzyme A from propionyl-CoA to succinate. Could be part of a pathway that converts succinate to propionate. This chain is Propanoyl-CoA:succinate CoA transferase, found in Escherichia coli (strain K12).